The chain runs to 215 residues: NAD(P)H-quinone oxidoreductase subunit I (215 aa).

4Fe-4S ferredoxin-type domains lie at 55 to 84 (GRIH…VDWV) and 95 to 124 (RNYS…MTEE). Residues C64, C67, C70, C74, C104, C107, C110, and C114 each coordinate [4Fe-4S] cluster. A compositionally biased stretch (basic and acidic residues) spans 169 to 180 (MDPHGVASDRPR). A disordered region spans residues 169-215 (MDPHGVASDRPRAGQLPAQVLETLTPPAKPTAKNDGQSSSEAKEGDA).

It belongs to the complex I 23 kDa subunit family. As to quaternary structure, NDH-1 is composed of at least 11 different subunits. It depends on [4Fe-4S] cluster as a cofactor.

It is found in the cellular thylakoid membrane. The enzyme catalyses a plastoquinone + NADH + (n+1) H(+)(in) = a plastoquinol + NAD(+) + n H(+)(out). It catalyses the reaction a plastoquinone + NADPH + (n+1) H(+)(in) = a plastoquinol + NADP(+) + n H(+)(out). In terms of biological role, NDH-1 shuttles electrons from an unknown electron donor, via FMN and iron-sulfur (Fe-S) centers, to quinones in the respiratory and/or the photosynthetic chain. The immediate electron acceptor for the enzyme in this species is believed to be plastoquinone. Couples the redox reaction to proton translocation, and thus conserves the redox energy in a proton gradient. In Synechococcus sp. (strain CC9605), this protein is NAD(P)H-quinone oxidoreductase subunit I.